Reading from the N-terminus, the 436-residue chain is 3-ketoacyl-CoA thiolase (436 aa).

The active-site Acyl-thioester intermediate is the Cys-99. Catalysis depends on proton acceptor residues His-392 and Cys-422.

It belongs to the thiolase-like superfamily. Thiolase family. As to quaternary structure, heterotetramer of two alpha chains (FadJ) and two beta chains (FadI).

It localises to the cytoplasm. The catalysed reaction is an acyl-CoA + acetyl-CoA = a 3-oxoacyl-CoA + CoA. Its pathway is lipid metabolism; fatty acid beta-oxidation. Functionally, catalyzes the final step of fatty acid oxidation in which acetyl-CoA is released and the CoA ester of a fatty acid two carbons shorter is formed. The polypeptide is 3-ketoacyl-CoA thiolase (Shewanella frigidimarina (strain NCIMB 400)).